The following is a 419-amino-acid chain: Serine--tRNA ligase (419 aa).

An L-serine-binding site is contributed by 226–228 (TSE). Residues 257-259 (RRE) and Val-273 contribute to the ATP site. An L-serine-binding site is contributed by Glu-280. 344–347 (ELTS) contacts ATP. Thr-379 provides a ligand contact to L-serine.

The protein belongs to the class-II aminoacyl-tRNA synthetase family. Type-1 seryl-tRNA synthetase subfamily. Homodimer. The tRNA molecule binds across the dimer.

The protein resides in the cytoplasm. The enzyme catalyses tRNA(Ser) + L-serine + ATP = L-seryl-tRNA(Ser) + AMP + diphosphate + H(+). The catalysed reaction is tRNA(Sec) + L-serine + ATP = L-seryl-tRNA(Sec) + AMP + diphosphate + H(+). It functions in the pathway aminoacyl-tRNA biosynthesis; selenocysteinyl-tRNA(Sec) biosynthesis; L-seryl-tRNA(Sec) from L-serine and tRNA(Sec): step 1/1. Functionally, catalyzes the attachment of serine to tRNA(Ser). Is also able to aminoacylate tRNA(Sec) with serine, to form the misacylated tRNA L-seryl-tRNA(Sec), which will be further converted into selenocysteinyl-tRNA(Sec). The protein is Serine--tRNA ligase of Mycobacterium marinum (strain ATCC BAA-535 / M).